A 339-amino-acid polypeptide reads, in one-letter code: Ferredoxin--NADP reductase (339 aa).

Residues D32, Q40, Y45, V85, F120, D287, and T327 each coordinate FAD.

Belongs to the ferredoxin--NADP reductase type 2 family. In terms of assembly, homodimer. FAD serves as cofactor.

It carries out the reaction 2 reduced [2Fe-2S]-[ferredoxin] + NADP(+) + H(+) = 2 oxidized [2Fe-2S]-[ferredoxin] + NADPH. The protein is Ferredoxin--NADP reductase of Wolbachia sp. subsp. Brugia malayi (strain TRS).